The following is a 191-amino-acid chain: Dephospho-CoA kinase (191 aa).

Positions Ala3–Val191 constitute a DPCK domain. An ATP-binding site is contributed by Ala11–Phe16.

Belongs to the CoaE family.

It localises to the cytoplasm. It carries out the reaction 3'-dephospho-CoA + ATP = ADP + CoA + H(+). It participates in cofactor biosynthesis; coenzyme A biosynthesis; CoA from (R)-pantothenate: step 5/5. Its function is as follows. Catalyzes the phosphorylation of the 3'-hydroxyl group of dephosphocoenzyme A to form coenzyme A. In Rickettsia conorii (strain ATCC VR-613 / Malish 7), this protein is Dephospho-CoA kinase.